A 143-amino-acid polypeptide reads, in one-letter code: Large ribosomal subunit protein uL16c (143 aa).

This sequence belongs to the universal ribosomal protein uL16 family. In terms of assembly, part of the 50S ribosomal subunit.

Its subcellular location is the plastid. It is found in the chloroplast. This chain is Large ribosomal subunit protein uL16c, found in Marchantia polymorpha (Common liverwort).